The following is a 343-amino-acid chain: Multidrug resistance protein MdtN (343 aa).

At 1-12 the chain is on the cytoplasmic side; the sequence is MESTPKKAPRSK. Residues 13–33 form a helical; Signal-anchor for type II membrane protein membrane-spanning segment; that stretch reads FPALLVVALALVALVFVIWRV. Topologically, residues 34-343 are periplasmic; that stretch reads DSAPSTNDAY…ASAVANLEPQ (310 aa).

The protein belongs to the membrane fusion protein (MFP) (TC 8.A.1) family. As to quaternary structure, could be part of a tripartite efflux system composed of MdtN, MdtO and MdtP.

It is found in the cell inner membrane. In terms of biological role, could be involved in resistance to puromycin, acriflavine and tetraphenylarsonium chloride. This is Multidrug resistance protein MdtN (mdtN) from Escherichia coli (strain K12).